A 366-amino-acid chain; its full sequence is Polyamine aminopropyltransferase 2 (366 aa).

Over residues 20-58 (KDKRSELDSDKFELEQQDKHDIQDKQDKQDEQNKQDKQV) the composition is skewed to basic and acidic residues. Residues 20-61 (KDKRSELDSDKFELEQQDKHDIQDKQDKQDEQNKQDKQVQSE) form a disordered region. The PABS domain occupies 74–305 (DVWDEISLKE…TDWGFHLATN (232 aa)). S-methyl-5'-thioadenosine is bound at residue glutamine 100. Residues histidine 129 and aspartate 153 each contribute to the spermidine site. S-methyl-5'-thioadenosine-binding positions include aspartate 173 and 207–208 (DA). Catalysis depends on aspartate 225, which acts as the Proton acceptor.

It belongs to the spermidine/spermine synthase family. As to quaternary structure, homodimer or homotetramer.

It localises to the cytoplasm. It carries out the reaction S-adenosyl 3-(methylsulfanyl)propylamine + putrescine = S-methyl-5'-thioadenosine + spermidine + H(+). Its pathway is amine and polyamine biosynthesis; spermidine biosynthesis; spermidine from putrescine: step 1/1. Functionally, catalyzes the irreversible transfer of a propylamine group from the amino donor S-adenosylmethioninamine (decarboxy-AdoMet) to putrescine (1,4-diaminobutane) to yield spermidine. This Bacillus cereus (strain ATCC 14579 / DSM 31 / CCUG 7414 / JCM 2152 / NBRC 15305 / NCIMB 9373 / NCTC 2599 / NRRL B-3711) protein is Polyamine aminopropyltransferase 2.